We begin with the raw amino-acid sequence, 354 residues long: 3-dehydroquinate synthase (354 aa).

NAD(+) contacts are provided by residues 100–104 (GATGD), 124–125 (TT), Lys-136, Lys-145, and 163–166 (FLKT). Zn(2+) contacts are provided by Glu-178, His-242, and His-256.

The protein belongs to the sugar phosphate cyclases superfamily. Dehydroquinate synthase family. NAD(+) is required as a cofactor. Requires Co(2+) as cofactor. It depends on Zn(2+) as a cofactor.

The protein localises to the cytoplasm. It carries out the reaction 7-phospho-2-dehydro-3-deoxy-D-arabino-heptonate = 3-dehydroquinate + phosphate. Its pathway is metabolic intermediate biosynthesis; chorismate biosynthesis; chorismate from D-erythrose 4-phosphate and phosphoenolpyruvate: step 2/7. Functionally, catalyzes the conversion of 3-deoxy-D-arabino-heptulosonate 7-phosphate (DAHP) to dehydroquinate (DHQ). This is 3-dehydroquinate synthase from Staphylococcus aureus (strain MSSA476).